Reading from the N-terminus, the 270-residue chain is 4-hydroxy-tetrahydrodipicolinate reductase (270 aa).

NAD(+) is bound by residues 11–16 (GAGGRM) and E37. R38 is a binding site for NADP(+). Residues 101–103 (GTT) and 125–128 (APNM) contribute to the NAD(+) site. The active-site Proton donor/acceptor is H158. Residue H159 coordinates (S)-2,3,4,5-tetrahydrodipicolinate. K162 functions as the Proton donor in the catalytic mechanism. 168 to 169 (GT) contributes to the (S)-2,3,4,5-tetrahydrodipicolinate binding site.

Belongs to the DapB family.

The protein resides in the cytoplasm. It carries out the reaction (S)-2,3,4,5-tetrahydrodipicolinate + NAD(+) + H2O = (2S,4S)-4-hydroxy-2,3,4,5-tetrahydrodipicolinate + NADH + H(+). The enzyme catalyses (S)-2,3,4,5-tetrahydrodipicolinate + NADP(+) + H2O = (2S,4S)-4-hydroxy-2,3,4,5-tetrahydrodipicolinate + NADPH + H(+). The protein operates within amino-acid biosynthesis; L-lysine biosynthesis via DAP pathway; (S)-tetrahydrodipicolinate from L-aspartate: step 4/4. In terms of biological role, catalyzes the conversion of 4-hydroxy-tetrahydrodipicolinate (HTPA) to tetrahydrodipicolinate. The polypeptide is 4-hydroxy-tetrahydrodipicolinate reductase (Shewanella sp. (strain ANA-3)).